Consider the following 118-residue polypeptide: uncharacterized protein (118 aa).

An N-terminal signal peptide occupies residues 1–22 (MKMSYLRSGIVGFLAGASLSYA). Residues 41 to 71 (TATEALETDKQLYKKIEKKIEELESSCVKKS) are a coiled coil.

This is an uncharacterized protein from Schizosaccharomyces pombe (strain 972 / ATCC 24843) (Fission yeast).